The sequence spans 40 residues: Large ribosomal subunit protein bL36B (40 aa).

It belongs to the bacterial ribosomal protein bL36 family.

In Leifsonia xyli subsp. xyli (strain CTCB07), this protein is Large ribosomal subunit protein bL36B.